We begin with the raw amino-acid sequence, 626 residues long: Chaperone protein HtpG (626 aa).

The tract at residues Met-1–Arg-341 is a; substrate-binding. The tract at residues Glu-342–Lys-552 is b. Residues Ile-553–Val-626 are c.

This sequence belongs to the heat shock protein 90 family. As to quaternary structure, homodimer.

Its subcellular location is the cytoplasm. In terms of biological role, molecular chaperone. Has ATPase activity. This Bacillus subtilis (strain 168) protein is Chaperone protein HtpG.